The following is a 176-amino-acid chain: ATP synthase subunit b, chloroplastic (176 aa).

Residues 27-49 traverse the membrane as a helical segment; sequence ILNLAAVFALLAYVGTDFVSSLL.

Belongs to the ATPase B chain family. F-type ATPases have 2 components, F(1) - the catalytic core - and F(0) - the membrane proton channel. F(1) has five subunits: alpha(3), beta(3), gamma(1), delta(1), epsilon(1). F(0) has four main subunits: a(1), b(1), b'(1) and c(10-14). The alpha and beta chains form an alternating ring which encloses part of the gamma chain. F(1) is attached to F(0) by a central stalk formed by the gamma and epsilon chains, while a peripheral stalk is formed by the delta, b and b' chains.

Its subcellular location is the plastid. It localises to the chloroplast thylakoid membrane. F(1)F(0) ATP synthase produces ATP from ADP in the presence of a proton or sodium gradient. F-type ATPases consist of two structural domains, F(1) containing the extramembraneous catalytic core and F(0) containing the membrane proton channel, linked together by a central stalk and a peripheral stalk. During catalysis, ATP synthesis in the catalytic domain of F(1) is coupled via a rotary mechanism of the central stalk subunits to proton translocation. Functionally, component of the F(0) channel, it forms part of the peripheral stalk, linking F(1) to F(0). This is ATP synthase subunit b, chloroplastic from Nephroselmis olivacea (Green alga).